We begin with the raw amino-acid sequence, 157 residues long: uncharacterized protein (157 aa).

The N-acetyltransferase domain occupies 9–146; that stretch reads LLINYKTLDE…GDFYVWHPET (138 aa).

This is an uncharacterized protein from Bacillus anthracis (strain CDC 684 / NRRL 3495).